The sequence spans 166 residues: Large ribosomal subunit protein uL11 (166 aa).

The protein belongs to the universal ribosomal protein uL11 family. In terms of assembly, part of the ribosomal stalk of the 50S ribosomal subunit. Interacts with L10 and the large rRNA to form the base of the stalk. L10 forms an elongated spine to which L12 dimers bind in a sequential fashion forming a multimeric L10(L12)X complex.

In terms of biological role, forms part of the ribosomal stalk which helps the ribosome interact with GTP-bound translation factors. The polypeptide is Large ribosomal subunit protein uL11 (Methanopyrus kandleri (strain AV19 / DSM 6324 / JCM 9639 / NBRC 100938)).